Consider the following 366-residue polypeptide: Palmitoyltransferase ZDHHC2 (366 aa).

The Cytoplasmic segment spans residues 1-15 (MAPSGSGGVRRRCRR). Residues 16-36 (VLYWIPVVFISLLLGWSYYAY) traverse the membrane as a helical segment. The Lumenal portion of the chain corresponds to 37-47 (AIQLCIVSMEN). A helical transmembrane segment spans residues 48–68 (IGEQVVCLMAYHLLFAMFVWS). The Cytoplasmic segment spans residues 69–169 (YWKTIFTLPM…NNCVGFSNYK (101 aa)). The DHHC domain occupies 126-176 (RYCDRCQLIKPDRCHHCSVCDKCILKMDHHCPWVNNCVGFSNYKFFLLFLA). Cys-156 serves as the catalytic S-palmitoyl cysteine intermediate. The chain crosses the membrane as a helical span at residues 170-190 (FFLLFLAYSLLYCLFIAATDL). At 191–207 (QYFIRFWTNGLPDTQAK) the chain is on the lumenal side. The helical transmembrane segment at 208 to 228 (FHIMFLFFAAAMFSVSLSSLF) threads the bilayer. The Cytoplasmic portion of the chain corresponds to 229-366 (GYHCWLVSKN…NPALTMENET (138 aa)). The span at 297–316 (VNQDPEQPSTPAGLNSTVKN) shows a compositional bias: polar residues. The tract at residues 297 to 366 (VNQDPEQPST…NPALTMENET (70 aa)) is disordered. Residues 298–366 (NQDPEQPSTP…NPALTMENET (69 aa)) form a mediates localization to plasma membrane and recycling endosomes region. A compositionally biased stretch (basic and acidic residues) spans 326 to 336 (PLRESQSHLLK). A Non-canonical dileucine endocytic signal motif is present at residues 334–335 (LL). Positions 337 to 347 (DSQTWTESSAN) are enriched in polar residues. Positions 357 to 360 (NPAL) match the NPxY-like endocytic signal motif.

Belongs to the DHHC palmitoyltransferase family. As to quaternary structure, monomer. Homodimer. The monomeric form has a higher catalytic activity. Post-translationally, autopalmitoylated. As to expression, expressed in all brain regions.

It localises to the postsynaptic density. The protein resides in the postsynaptic recycling endosome membrane. It is found in the cell membrane. Its subcellular location is the endoplasmic reticulum membrane. The protein localises to the golgi apparatus membrane. The catalysed reaction is L-cysteinyl-[protein] + hexadecanoyl-CoA = S-hexadecanoyl-L-cysteinyl-[protein] + CoA. It carries out the reaction L-cysteinyl-[protein] + tetradecanoyl-CoA = S-tetradecanoyl-L-cysteinyl-[protein] + CoA. It catalyses the reaction L-cysteinyl-[protein] + octadecanoyl-CoA = S-octadecanoyl-L-cysteinyl-[protein] + CoA. In terms of biological role, palmitoyltransferase that catalyzes the addition of palmitate onto various protein substrates and is involved in a variety of cellular processes. Has no stringent fatty acid selectivity and in addition to palmitate can also transfer onto target proteins myristate from tetradecanoyl-CoA and stearate from octadecanoyl-CoA. In the nervous system, plays a role in long term synaptic potentiation by palmitoylating AKAP5 through which it regulates protein trafficking from the dendritic recycling endosomes to the plasma membrane and controls both structural and functional plasticity at excitatory synapses. In dendrites, mediates the palmitoylation of DLG4 when synaptic activity decreases and induces synaptic clustering of DLG4 and associated AMPA-type glutamate receptors. Also mediates the de novo and turnover palmitoylation of RGS7BP, a shuttle for Gi/o-specific GTPase-activating proteins/GAPs, promoting its localization to the plasma membrane in response to the activation of G protein-coupled receptors. Through the localization of these GTPase-activating proteins/GAPs, it also probably plays a role in G protein-coupled receptors signaling in neurons. Also probably plays a role in cell adhesion by palmitoylating CD9 and CD151 to regulate their expression and function. Palmitoylates the endoplasmic reticulum protein CKAP4 and regulates its localization to the plasma membrane. Could also palmitoylate LCK and regulate its localization to the plasma membrane. The sequence is that of Palmitoyltransferase ZDHHC2 from Mus musculus (Mouse).